Consider the following 899-residue polypeptide: Translation initiation factor IF-2 (899 aa).

Disordered regions lie at residues 65 to 84 (KTRSTLNVPSTGGKSKSVQI) and 91 to 310 (TYVK…SFNK). Positions 68–82 (STLNVPSTGGKSKSV) are enriched in polar residues. The segment covering 108–164 (QARREAEEQAQRAAEEQAKREAELREAAEKAKRAADEQAKREAAEKAKRDVAEKEKV) has biased composition (basic and acidic residues). The segment covering 165 to 174 (TNQQNENMTK) has biased composition (polar residues). Residues 177 to 236 (QAEKAKREAEAAELKRKAEEAARLKVEEEARRIAEEARRMAEENAGRWEAESAKPEESAD) are compositionally biased toward basic and acidic residues. Over residues 262–276 (SRSRAGKVTKQKKGN) the composition is skewed to basic residues. Residues 277–290 (RQSESKADREEARA) are compositionally biased toward basic and acidic residues. The tr-type G domain maps to 398–567 (ARAPVVTIMG…LLQAEVLELK (170 aa)). The tract at residues 407-414 (GHVDHGKT) is G1. 407–414 (GHVDHGKT) contributes to the GTP binding site. Positions 432-436 (GITQH) are G2. Positions 453 to 456 (DTPG) are G3. GTP-binding positions include 453–457 (DTPGH) and 507–510 (NKID). The tract at residues 507 to 510 (NKID) is G4. Residues 543 to 545 (SAK) are G5.

Belongs to the TRAFAC class translation factor GTPase superfamily. Classic translation factor GTPase family. IF-2 subfamily.

It localises to the cytoplasm. In terms of biological role, one of the essential components for the initiation of protein synthesis. Protects formylmethionyl-tRNA from spontaneous hydrolysis and promotes its binding to the 30S ribosomal subunits. Also involved in the hydrolysis of GTP during the formation of the 70S ribosomal complex. The sequence is that of Translation initiation factor IF-2 from Pectobacterium carotovorum subsp. carotovorum (strain PC1).